Here is a 231-residue protein sequence, read N- to C-terminus: 7-cyano-7-deazaguanine synthase (231 aa).

8–18 (FSGGQDSTTCL) provides a ligand contact to ATP. 4 residues coordinate Zn(2+): Cys-188, Cys-197, Cys-200, and Cys-203.

This sequence belongs to the QueC family. Zn(2+) is required as a cofactor.

It catalyses the reaction 7-carboxy-7-deazaguanine + NH4(+) + ATP = 7-cyano-7-deazaguanine + ADP + phosphate + H2O + H(+). It participates in purine metabolism; 7-cyano-7-deazaguanine biosynthesis. Its function is as follows. Catalyzes the ATP-dependent conversion of 7-carboxy-7-deazaguanine (CDG) to 7-cyano-7-deazaguanine (preQ(0)). The chain is 7-cyano-7-deazaguanine synthase from Escherichia coli (strain ATCC 8739 / DSM 1576 / NBRC 3972 / NCIMB 8545 / WDCM 00012 / Crooks).